We begin with the raw amino-acid sequence, 184 residues long: Shikimate kinase (184 aa).

An ATP-binding site is contributed by 20 to 25; it reads GVGKSR. A Mg(2+)-binding site is contributed by serine 24. Substrate contacts are provided by aspartate 42, arginine 66, and glycine 88. Arginine 127 lines the ATP pocket. A substrate-binding site is contributed by arginine 146. Residue arginine 162 coordinates ATP.

The protein belongs to the shikimate kinase family. Monomer. Mg(2+) serves as cofactor.

Its subcellular location is the cytoplasm. It carries out the reaction shikimate + ATP = 3-phosphoshikimate + ADP + H(+). It participates in metabolic intermediate biosynthesis; chorismate biosynthesis; chorismate from D-erythrose 4-phosphate and phosphoenolpyruvate: step 5/7. Catalyzes the specific phosphorylation of the 3-hydroxyl group of shikimic acid using ATP as a cosubstrate. The chain is Shikimate kinase from Thermus thermophilus (strain ATCC 27634 / DSM 579 / HB8).